The sequence spans 917 residues: Nitrate reductase [NADH] 2 (917 aa).

The segment at 1–72 (MAASVDNRQY…SEDENETHNS (72 aa)) is disordered. Positions 37–47 (AHQNQTTNQTV) are enriched in polar residues. Acidic residues predominate over residues 57-67 (DDEDVSSEDEN). C191 contacts Mo-molybdopterin. The 76-residue stretch at 542-617 (AKMYSMSEVK…LEDYRIGELI (76 aa)) folds into the Cytochrome b5 heme-binding domain. Heme is bound by residues H577 and H600. Residues 660 to 772 (RAKVPVQLVE…KGPLGHVEYL (113 aa)) enclose the FAD-binding FR-type domain. FAD contacts are provided by residues 712 to 715 (RAYT), 729 to 733 (VVKIY), F734, F741, 746 to 748 (LMS), and T799.

This sequence belongs to the nitrate reductase family. In terms of assembly, homodimer. Requires FAD as cofactor. It depends on heme as a cofactor. The cofactor is Mo-molybdopterin. As to expression, root, leaf, and shoot.

It carries out the reaction nitrite + NAD(+) + H2O = nitrate + NADH + H(+). In terms of biological role, nitrate reductase is a key enzyme involved in the first step of nitrate assimilation in plants, fungi and bacteria. The sequence is that of Nitrate reductase [NADH] 2 (NIA2) from Arabidopsis thaliana (Mouse-ear cress).